Consider the following 505-residue polypeptide: 2,3-bisphosphoglycerate-independent phosphoglycerate mutase (505 aa).

Mn(2+)-binding residues include aspartate 12 and serine 62. Serine 62 functions as the Phosphoserine intermediate in the catalytic mechanism. Residues histidine 123, 153–154 (RD), arginine 185, arginine 191, 257–260 (RPDR), and lysine 330 each bind substrate. Residues aspartate 397, histidine 401, aspartate 438, histidine 439, and histidine 456 each coordinate Mn(2+).

It belongs to the BPG-independent phosphoglycerate mutase family. Monomer. Mn(2+) serves as cofactor.

The enzyme catalyses (2R)-2-phosphoglycerate = (2R)-3-phosphoglycerate. It functions in the pathway carbohydrate degradation; glycolysis; pyruvate from D-glyceraldehyde 3-phosphate: step 3/5. Catalyzes the interconversion of 2-phosphoglycerate and 3-phosphoglycerate. This Staphylococcus aureus (strain Mu50 / ATCC 700699) protein is 2,3-bisphosphoglycerate-independent phosphoglycerate mutase.